The chain runs to 70 residues: NADH dehydrogenase [ubiquinone] 1 alpha subcomplex subunit 1 (70 aa).

A helical membrane pass occupies residues 1–21; it reads MWFEILPGLAIMGVCLVIPGV.

Belongs to the complex I NDUFA1 subunit family. Complex I is composed of 45 different subunits.

Its subcellular location is the mitochondrion inner membrane. Accessory subunit of the mitochondrial membrane respiratory chain NADH dehydrogenase (Complex I), that is believed not to be involved in catalysis. Complex I functions in the transfer of electrons from NADH to the respiratory chain. The immediate electron acceptor for the enzyme is believed to be ubiquinone. The sequence is that of NADH dehydrogenase [ubiquinone] 1 alpha subcomplex subunit 1 (Ndufa1) from Mus musculus (Mouse).